The chain runs to 25 residues: Caerin-1.3 (25 aa).

Leu25 is modified (leucine amide).

In terms of tissue distribution, expressed by the skin parotoid and/or rostral glands.

It localises to the secreted. Antibacterial peptide, that adopts an alpha helical conformation which can disrupt bacterial membranes. Each caerin displays a different antimicrobial specificity. This is Caerin-1.3 from Ranoidea caerulea (Green tree frog).